Consider the following 244-residue polypeptide: Small ribosomal subunit protein uS3 (244 aa).

One can recognise a KH type-2 domain in the interval 39 to 107; the sequence is VREMLRKKLA…PAHINVTEVR (69 aa). Positions 213-244 are disordered; it reads VGQEKQDDSPRNDRNDRGDRGDRPSRPAREAR. The segment covering 216–244 has biased composition (basic and acidic residues); that stretch reads EKQDDSPRNDRNDRGDRGDRPSRPAREAR.

The protein belongs to the universal ribosomal protein uS3 family. In terms of assembly, part of the 30S ribosomal subunit. Forms a tight complex with proteins S10 and S14.

Functionally, binds the lower part of the 30S subunit head. Binds mRNA in the 70S ribosome, positioning it for translation. The protein is Small ribosomal subunit protein uS3 of Xanthomonas campestris pv. campestris (strain 8004).